The chain runs to 525 residues: Ubiquitin carboxyl-terminal hydrolase 22 (525 aa).

Residues 21 to 138 (PGCSHLGSFK…KEEQRKAWKM (118 aa)) form a UBP-type zinc finger. 12 residues coordinate Zn(2+): cysteine 23, histidine 25, cysteine 63, cysteine 66, cysteine 76, cysteine 79, cysteine 84, histidine 89, histidine 93, histidine 99, cysteine 112, and cysteine 115. An N6-acetyllysine modification is found at lysine 129. Threonine 147 is subject to Phosphothreonine. A USP domain is found at 176-520 (RGLINLGNTC…EGYLLFYHKQ (345 aa)). The active-site Nucleophile is the cysteine 185. The residue at position 237 (serine 237) is a Phosphoserine. The Proton acceptor role is filled by histidine 479.

This sequence belongs to the peptidase C19 family. UBP8 subfamily. As to quaternary structure, component of some SAGA transcription coactivator-HAT complexes, at least composed of ATXN7, ATXN7L3, ENY2, GCN5L2, SUPT3H, TAF10, TRRAP and USP22. Within the SAGA complex, ATXN7L3, ENY2 and USP22 form a subcomplex required for histone deubiquitination. Interacts directly with ATXN7L3; leading to its recruitment to the SAGA complex. Interacts with ATXN7L3 and weakly with ATXN7L3B. Interacts with MED1. Phosphorylated in G2/M phase, but not in G1 phase by CDK1. Post-translationally, ubiquitinated and subsequently degraded in a CDC20-dependent manner. In terms of tissue distribution, highly expressed in brain and weakly in other organs.

The protein localises to the nucleus. Its subcellular location is the cytoplasm. The catalysed reaction is Thiol-dependent hydrolysis of ester, thioester, amide, peptide and isopeptide bonds formed by the C-terminal Gly of ubiquitin (a 76-residue protein attached to proteins as an intracellular targeting signal).. Deubiquitinase that plays a role in several cellular processes including transcriptional regulation, cell cycle progression or innate immunity. As part of the transcription regulatory histone acetylation (HAT) complex SAGA, catalyzes the deubiquitination of both histones H2A and H2B, thereby acting as a transcriptional coactivator. Recruited to specific gene promoters by activators such as MYC, where it is required for transcription. Facilitates cell-cycle progression by stabilizing CCNB1 and antagonizing its proteasome-mediated degradation in a cell cycle-specific manner. Modulates cell cycle progression and apoptosis also by antagonizing TP53 transcriptional activation through deacetylase SIRT1 stabilization. Plays multiple roles in immunity and inflammation. Participates in antiviral response by deubiquitinating the importin KPNA2, leading to IRF3 nuclear translocation and subsequent type I interferon production. Acts as a central regulator of type III IFN signaling by negatively regulating STING1 activation and ubiquitination. Inhibits NLRP3 inflammasome activation by promoting NLRP3 degradation through ATG5-dependent autophagy. Deubiquitinates CD274 to induce its stabilization and thereby participates in maintenance of immune tolerance to self. Controls necroptotic cell death by regulating RIPK3 phosphorylation and ubiquitination. During bacterial infection, promotes pro-inflammatory response by targeting TRAF6 and removing its 'Lys-48'-linked polyubiquitination. This chain is Ubiquitin carboxyl-terminal hydrolase 22 (Usp22), found in Mus musculus (Mouse).